The chain runs to 387 residues: Cytochrome b (387 aa).

A helical transmembrane segment spans residues 32 to 52 (LGSLLGLCLVIQIASGVFLAM). 2 residues coordinate heme b: His82 and His96. Helical transmembrane passes span 85–105 (GASF…YYGS), 116–136 (IGVV…CLVY), 151–171 (LSAI…GFSV), 179–199 (FFAL…MHLM), 225–245 (FIFK…LFVF), 289–309 (LGGV…PYTD), 324–344 (LAFY…QLHV), and 350–370 (QLGQ…VPVI). His183 and His197 together coordinate heme b.

The protein belongs to the cytochrome b family. In terms of assembly, component of the ubiquinol-cytochrome c oxidoreductase (cytochrome b-c1 complex, complex III, CIII), a multisubunit enzyme composed of 10 subunits. The complex is composed of 3 respiratory subunits cytochrome b (COB), cytochrome c1 (CYT1) and Rieske protein (RIP1), 2 core protein subunits COR1 and QCR2, and 5 low-molecular weight protein subunits QCR6, QCR7, QCR8, QCR9 and QCR10. The complex exists as an obligatory dimer and forms supercomplexes (SCs) in the inner mitochondrial membrane with a monomer or a dimer of cytochrome c oxidase (complex IV, CIV), resulting in 2 different assemblies (supercomplexes III(2)IV and III(2)IV(2)). Requires heme b as cofactor.

It localises to the mitochondrion inner membrane. In terms of biological role, component of the ubiquinol-cytochrome c oxidoreductase, a multisubunit transmembrane complex that is part of the mitochondrial electron transport chain which drives oxidative phosphorylation. The complex plays an important role in the uptake of multiple carbon sources present in different host niches. This Candida albicans (strain SC5314 / ATCC MYA-2876) (Yeast) protein is Cytochrome b.